The sequence spans 246 residues: Dolichol-phosphate mannosyltransferase subunit 1 (246 aa).

GDP-alpha-D-mannose-binding residues include Pro-20, Tyr-22, Glu-24, Val-49, Asp-51, Asp-104, Ala-105, Asp-106, Arg-133, Arg-220, and Lys-226. Asp-106 is a binding site for Mg(2+). Mn(2+) is bound at residue Asp-106.

This sequence belongs to the glycosyltransferase 2 family. As to quaternary structure, component of the dolichol-phosphate mannose (DPM) synthase complex composed of DPMS1, DPMS2 and DPMS3; in the complex interacts directly with DPMS3. Mg(2+) is required as a cofactor. The cofactor is Mn(2+). Requires Ca(2+) as cofactor.

It localises to the endoplasmic reticulum membrane. The enzyme catalyses a di-trans,poly-cis-dolichyl phosphate + GDP-alpha-D-mannose = a di-trans,poly-cis-dolichyl beta-D-mannosyl phosphate + GDP. It participates in protein modification; protein glycosylation. Transfers mannose from GDP-mannose to dolichol monophosphate to form dolichol phosphate mannose (Dol-P-Man) which is the mannosyl donor in pathways leading to N-glycosylation, glycosyl phosphatidylinositol membrane anchoring, and O-mannosylation of proteins; catalytic subunit of the dolichol-phosphate mannose (DPM) synthase complex. Plays a role in plant development and physiology, sensitivity to ammonium stress and endoplasmic reticulum stress response. This Arabidopsis thaliana (Mouse-ear cress) protein is Dolichol-phosphate mannosyltransferase subunit 1.